We begin with the raw amino-acid sequence, 340 residues long: Replication factor C subunit 2 (340 aa).

59–66 (GSPGTGKT) is a binding site for ATP.

The protein belongs to the activator 1 small subunits family. Heteropentamer of subunits rfc1, rfc2, rfc3, rfc4 and rfc5 that forms a complex (RFC) with PCNA in the presence of ATP. Two other complexes exist where rfc1 can be replaced by either ctf18 or elg1 to form the ctf18-RFC or the elg1-RFC complexes respectively.

It localises to the nucleus. Functionally, the elongation of primed DNA templates by DNA polymerase delta and epsilon requires the action of the accessory proteins PCNA and activator 1. Subunit 2 binds ATP and single-stranded DNA. The protein is Replication factor C subunit 2 (rfc2) of Schizosaccharomyces pombe (strain 972 / ATCC 24843) (Fission yeast).